A 607-amino-acid chain; its full sequence is Autophagy-related protein 16-1 (607 aa).

The interval tryptophan 13 to leucine 43 is interaction with ATG5. Residues asparagine 78–glutamate 230 adopt a coiled-coil conformation. Residue serine 139 is modified to Phosphoserine; by CK2. A WIPI2-binding region spans residues alanine 207 to glutamate 230. Positions glutamate 230–valine 242 are RB1CC1-binding. Phosphoserine occurs at positions 269 and 287. The short motif at aspartate 296–aspartate 299 is the Caspase cleavage element. 7 WD repeats span residues alanine 320–lysine 359, glycine 364–threonine 403, glycine 406–threonine 445, phenylalanine 447–glutamate 484, glutamate 486–threonine 525, lysine 532–serine 573, and glutamine 575–tyrosine 607.

Belongs to the WD repeat ATG16 family. In terms of assembly, homodimer. Homooligomer. Heterooligomer with ATG16L2. Interacts with WIPI1. Interacts with WIPI2. Interacts with RB1CC1; the interaction is required for ULK1 complex-dependent autophagy. Interacts with ATG5. Part of the minor complex composed of 4 sets of ATG12-ATG5 and ATG16L1 (400 kDa); this complex interacts with ATG3 leading to disruption of ATG7 interaction and promotion of ATG8-like proteins lipidation. Part of the major complex composed of 8 sets of ATG12-ATG5 and ATG16L1 (800 kDa). Interacts with RAB33B (GTP- and GDP-bound forms); the complex consists of a tetramer where two RAB33B molecules bind independently one molecule of the ATG16L1 homodimer; the interaction promotes ATG12-ATG5-ATG16L1 complex recruitment to phagophores. Interacts (via WD repeats) with TMEM59; the interaction mediates unconventional autophagic activity of TMEM59. Interacts with TLR2. Interacts (via WD repeats) with MEFV. Interacts with PPP1CA; the interaction dephosphorylates ATG16L1 causing dissociation of ATG12-ATG5-ATG16L1 complex. Interacts (via N-terminal) with CLTC. Interacts with NOD1. Interacts with NOD2. Interacts with TUFM. Interacts with TRIM16. Interacts (via WD repeats) with SPATA33. Interacts with IRGM. In terms of processing, proteolytic cleavage by activated CASP3 leads to degradation and may regulate autophagy upon cellular stress and apoptotic stimuli. Phosphorylation at Ser-139 promotes association with the ATG12-ATG5 conjugate to form the ATG12-ATG5-ATG16L1 complex.

The protein localises to the cytoplasm. It is found in the preautophagosomal structure membrane. It localises to the endosome membrane. The protein resides in the lysosome membrane. In terms of biological role, plays an essential role in both canonical and non-canonical autophagy: interacts with ATG12-ATG5 to mediate the lipidation to ATG8 family proteins (MAP1LC3A, MAP1LC3B, MAP1LC3C, GABARAPL1, GABARAPL2 and GABARAP). Acts as a molecular hub, coordinating autophagy pathways via distinct domains that support either canonical or non-canonical signaling. During canonical autophagy, interacts with ATG12-ATG5 to mediate the conjugation of phosphatidylethanolamine (PE) to ATG8 proteins, to produce a membrane-bound activated form of ATG8. Thereby, controls the elongation of the nascent autophagosomal membrane. As part of the ATG8 conjugation system with ATG5 and ATG12, required for recruitment of LRRK2 to stressed lysosomes and induction of LRRK2 kinase activity in response to lysosomal stress. Also involved in non-canonical autophagy, a parallel pathway involving conjugation of ATG8 proteins to single membranes at endolysosomal compartments, probably by catalyzing conjugation of phosphatidylserine (PS) to ATG8. Non-canonical autophagy plays a key role in epithelial cells to limit lethal infection by influenza A (IAV) virus. Regulates mitochondrial antiviral signaling (MAVS)-dependent type I interferon (IFN-I) production. Negatively regulates NOD1- and NOD2-driven inflammatory cytokine response. Instead, promotes an autophagy-dependent antibacterial pathway together with NOD1 or NOD2. Plays a role in regulating morphology and function of Paneth cell. The sequence is that of Autophagy-related protein 16-1 from Homo sapiens (Human).